Consider the following 256-residue polypeptide: Stanniocalcin (256 aa).

The N-terminal stretch at 1–18 (MLAKFGLCAVFLVLGTAA) is a signal peptide. A propeptide spanning residues 19-33 (TFDTDPEEASPRRAR) is cleaved from the precursor. Asparagine 62 carries an N-linked (GlcNAc...) asparagine glycan. The interval 204–241 (QGSNQGPNSAPAGWRWPMGSPPSFKIQPSMRGRDPTHL) is disordered.

This sequence belongs to the stanniocalcin family. As to quaternary structure, homodimer; disulfide-linked. As to expression, produced and secreted by the corpuscles of Stannius.

The protein localises to the secreted. Its primary function is the prevention of hypercalcemia. Upon release into the circulation, it lowers calcium transport by the gills, thereby reducing its rate of influx from the environment into the extracellular compartment. STC also stimulates phosphate reabsorption by renal proximal tubules. The consequence of this action is increased levels of plasma phosphate, which combines with excess calcium and promotes its disposal into bone and scales. In Oncorhynchus mykiss (Rainbow trout), this protein is Stanniocalcin (stc).